A 107-amino-acid chain; its full sequence is Small ribosomal subunit protein uS10c (107 aa).

It belongs to the universal ribosomal protein uS10 family. In terms of assembly, part of the 30S ribosomal subunit.

It localises to the plastid. The protein localises to the chloroplast. Functionally, involved in the binding of tRNA to the ribosomes. The polypeptide is Small ribosomal subunit protein uS10c (Phaeodactylum tricornutum (strain CCAP 1055/1)).